The chain runs to 192 residues: uncharacterized protein (192 aa).

In terms of domain architecture, Nudix hydrolase spans 29–160 (QRQAAVLVPI…PLDIHRRGND (132 aa)). A Nudix box motif is present at residues 67 to 89 (GAVDNTDATLIAAALREAQEEVA). Residues glutamate 83 and glutamate 87 each coordinate Mg(2+).

Belongs to the Nudix hydrolase family. PCD1 subfamily. It depends on Mn(2+) as a cofactor. Mg(2+) is required as a cofactor.

Probably mediates the hydrolysis of some nucleoside diphosphate derivatives. This is an uncharacterized protein from Klebsiella pneumoniae (strain 342).